We begin with the raw amino-acid sequence, 387 residues long: Patatin-03 (387 aa).

Residues methionine 1 to alanine 23 form the signal peptide. The 199-residue stretch at leucine 32–valine 230 folds into the PNPLA domain. A GXGXXG motif is present at residues glycine 36–glycine 41. Positions glycine 75–glycine 79 match the GXSXG motif. Serine 77 functions as the Nucleophile in the catalytic mechanism. Residues asparagine 115 and asparagine 203 are each glycosylated (N-linked (GlcNAc...) asparagine). Residue aspartate 216 is the Proton acceptor of the active site. A DGA/G motif is present at residues aspartate 216–alanine 218.

This sequence belongs to the patatin family. In terms of tissue distribution, tuber.

It localises to the vacuole. Its function is as follows. Probable lipolytic acyl hydrolase (LAH), an activity which is thought to be involved in the response of tubers to pathogens. This chain is Patatin-03, found in Solanum tuberosum (Potato).